We begin with the raw amino-acid sequence, 207 residues long: Ras-related protein Rab7A (207 aa).

GTP contacts are provided by residues 15–22 (GDSGVGKT), 63–67 (DTAGQ), and 125–128 (NKID). Residues C205 and C207 are each lipidated (S-geranylgeranyl cysteine). Cysteine methyl ester is present on C207.

This sequence belongs to the small GTPase superfamily. Rab family.

Its subcellular location is the cell membrane. Protein transport. Probably involved in vesicular traffic. The protein is Ras-related protein Rab7A of Mesembryanthemum crystallinum (Common ice plant).